A 72-amino-acid polypeptide reads, in one-letter code: NAD(P)H-quinone oxidoreductase subunit O (72 aa).

The protein belongs to the complex I NdhO subunit family. In terms of assembly, NDH-1 can be composed of about 15 different subunits; different subcomplexes with different compositions have been identified which probably have different functions.

It is found in the cellular thylakoid membrane. It carries out the reaction a plastoquinone + NADH + (n+1) H(+)(in) = a plastoquinol + NAD(+) + n H(+)(out). The catalysed reaction is a plastoquinone + NADPH + (n+1) H(+)(in) = a plastoquinol + NADP(+) + n H(+)(out). In terms of biological role, NDH-1 shuttles electrons from an unknown electron donor, via FMN and iron-sulfur (Fe-S) centers, to quinones in the respiratory and/or the photosynthetic chain. The immediate electron acceptor for the enzyme in this species is believed to be plastoquinone. Couples the redox reaction to proton translocation, and thus conserves the redox energy in a proton gradient. Cyanobacterial NDH-1 also plays a role in inorganic carbon-concentration. The protein is NAD(P)H-quinone oxidoreductase subunit O of Rippkaea orientalis (strain PCC 8801 / RF-1) (Cyanothece sp. (strain PCC 8801)).